A 343-amino-acid chain; its full sequence is Fructose-bisphosphate aldolase (343 aa).

Serine 53 serves as a coordination point for D-glyceraldehyde 3-phosphate. The active-site Proton donor is aspartate 95. Zn(2+)-binding residues include histidine 96, aspartate 131, glutamate 161, and histidine 212. Glycine 213 serves as a coordination point for dihydroxyacetone phosphate. Histidine 252 lines the Zn(2+) pocket. Dihydroxyacetone phosphate is bound by residues 253 to 255 (GGS) and 274 to 277 (NIDT).

It belongs to the class II fructose-bisphosphate aldolase family. Zn(2+) serves as cofactor.

The catalysed reaction is beta-D-fructose 1,6-bisphosphate = D-glyceraldehyde 3-phosphate + dihydroxyacetone phosphate. The protein operates within carbohydrate degradation; glycolysis; D-glyceraldehyde 3-phosphate and glycerone phosphate from D-glucose: step 4/4. In terms of biological role, catalyzes the aldol condensation of dihydroxyacetone phosphate (DHAP or glycerone-phosphate) with glyceraldehyde 3-phosphate (G3P) to form fructose 1,6-bisphosphate (FBP) in gluconeogenesis and the reverse reaction in glycolysis. In Streptomyces coelicolor (strain ATCC BAA-471 / A3(2) / M145), this protein is Fructose-bisphosphate aldolase (fba).